The primary structure comprises 943 residues: Protein translocase subunit SecA (943 aa).

ATP contacts are provided by residues glutamine 90, 108–112 (GEGKT), and aspartate 509. Residues 537–556 (NEHKPPIPKQRSSKSKGGFS) form a disordered region.

Belongs to the SecA family. In terms of assembly, monomer and homodimer. Part of the essential Sec protein translocation apparatus which comprises SecA, SecYEG and auxiliary proteins SecDF. Other proteins may also be involved.

The protein resides in the cell inner membrane. It localises to the cellular thylakoid membrane. Its subcellular location is the cytoplasm. The enzyme catalyses ATP + H2O + cellular proteinSide 1 = ADP + phosphate + cellular proteinSide 2.. Part of the Sec protein translocase complex. Interacts with the SecYEG preprotein conducting channel. Has a central role in coupling the hydrolysis of ATP to the transfer of proteins into and across the cell membrane, serving as an ATP-driven molecular motor driving the stepwise translocation of polypeptide chains across the membrane. Its function is as follows. Probably participates in protein translocation into and across both the cytoplasmic and thylakoid membranes in cyanobacterial cells. In Prochlorococcus marinus (strain MIT 9301), this protein is Protein translocase subunit SecA.